A 622-amino-acid chain; its full sequence is MSCLRKPSQSLVLSESVDPTTVDPFVDVRAEEVVPTGCMTLWEYRDSCGDVPGPLSHGDLRRLRTPDGVCKCQIHFEFPTVLKSGSTGTVPEHPAVVAAFMGRPRRCSLEQRTKELDFRFLQLVHEGLPVRPSYMIARPPRPVRGLCSSRDGSLAQFGQGYCYLSAIVDSARWRVARTTGWCVRVADYLRLLQWVGRRSFGSFQIEESTVEHVYHVIVDTEHQSEQDGALFYQAVSDLAARDPLARIGNQLNPLAAEFCPRSARRVEPVTPQVTRRKGLARMPGRSPTVVSVGNVGMAITSIQDALVATELRNVNFGRRDTEAECRRLWARYEVNDYFRRHKAELLKFDARLRSHMAKKPVSVRTRSSDAKIQCIGWRDRHLLPQRLAGLTKQKRSLIWSRFATSNIRRKASACTMTPSVDPMVHTWGDSAALAAKKISEARRRQEICAAAYAERAKARGQTNVVASISEAIETTLRRNGTRFALDGLHVAASVIVTTRLRSWNQEEVLAGREFRKSTTSWIWRHMPSSIQDALNLTSVRDKLDPGRAFGYVQAAVAQGMSDFRRAKRSLAIVAKPVIRNVRDPYDHGFVKRDGKLRHSRDVSNKKLRTKAVAATKVHKIIF.

In terms of domain architecture, Peptidase C7 spans M1–G248. Active-site for papain-like protease p29 activity residues include C162 and H215.

Autocatalytically processed.

P40 protein is involved in reduction of conidiation of the host. Not necessary for replication. Also involved in reduction of orange pigmentation of the host. Functionally, cysteine protease of the peptidase family C7 that contributes to hypovirulence-associated traits like the reduction in conidiation and laccase activity, but not to virulence attenuation. Acts as a suppressor of RNA-mediated gene silencing, also known as post-transcriptional gene silencing (PTGS), a mechanism of viral defense that limits the accumulation of viral RNAs. Enhances viral dsRNA accumulation and virus transmission. Also involved in the reduction in orange pigmentation of the host, an effect independent of the intrinsic protease activity. The sequence is that of Polyprotein p69 from Cryphonectria hypovirus 1 (strain Euro7) (CHV-1/Euro7).